The sequence spans 74 residues: Putative membrane protein insertion efficiency factor (74 aa).

The protein belongs to the UPF0161 family.

The protein resides in the cell inner membrane. In terms of biological role, could be involved in insertion of integral membrane proteins into the membrane. This Syntrophus aciditrophicus (strain SB) protein is Putative membrane protein insertion efficiency factor.